Consider the following 356-residue polypeptide: Arginine kinase 1 (356 aa).

Positions 6–91 (VLAKLEEGYA…FDPIIEDYHG (86 aa)) constitute a Phosphagen kinase N-terminal domain. Residue 64-68 (GVGIY) coordinates substrate. The Phosphagen kinase C-terminal domain occupies 119-356 (YVISTRVRCG…TELIKLEKSL (238 aa)). ATP is bound by residues 122 to 126 (STRVR) and His185. Substrate is bound at residue Glu225. An ATP-binding site is contributed by Arg229. Cys271 provides a ligand contact to substrate. ATP is bound by residues 280–284 (RASVH) and 309–314 (RGTRGE). Glu314 provides a ligand contact to substrate.

This sequence belongs to the ATP:guanido phosphotransferase family.

The enzyme catalyses L-arginine + ATP = N(omega)-phospho-L-arginine + ADP + H(+). This chain is Arginine kinase 1, found in Drosophila melanogaster (Fruit fly).